Consider the following 469-residue polypeptide: Mannosyl-oligosaccharide 1,2-alpha-mannosidase IA (469 aa).

The Lumenal portion of the chain corresponds to 1 to 469 (REPADAAVRE…DQKEVEVKVK (469 aa)). Cysteine 292 and cysteine 324 form a disulfide bridge. Asparagine 329 carries N-linked (GlcNAc...) asparagine glycosylation. Glutamate 338 functions as the Proton donor in the catalytic mechanism. Threonine 449 serves as a coordination point for Ca(2+).

The protein belongs to the glycosyl hydrolase 47 family. Ca(2+) is required as a cofactor.

It is found in the golgi apparatus membrane. It catalyses the reaction N(4)-(alpha-D-Man-(1-&gt;2)-alpha-D-Man-(1-&gt;2)-alpha-D-Man-(1-&gt;3)-[alpha-D-Man-(1-&gt;2)-alpha-D-Man-(1-&gt;3)-[alpha-D-Man-(1-&gt;2)-alpha-D-Man-(1-&gt;6)]-alpha-D-Man-(1-&gt;6)]-beta-D-Man-(1-&gt;4)-beta-D-GlcNAc-(1-&gt;4)-beta-D-GlcNAc)-L-asparaginyl-[protein] (N-glucan mannose isomer 9A1,2,3B1,2,3) + 4 H2O = N(4)-(alpha-D-Man-(1-&gt;3)-[alpha-D-Man-(1-&gt;3)-[alpha-D-Man-(1-&gt;6)]-alpha-D-Man-(1-&gt;6)]-beta-D-Man-(1-&gt;4)-beta-D-GlcNAc-(1-&gt;4)-beta-D-GlcNAc)-L-asparaginyl-[protein] (N-glucan mannose isomer 5A1,2) + 4 beta-D-mannose. It carries out the reaction N(4)-(alpha-D-Man-(1-&gt;2)-alpha-D-Man-(1-&gt;2)-alpha-D-Man-(1-&gt;3)-[alpha-D-Man-(1-&gt;3)-[alpha-D-Man-(1-&gt;2)-alpha-D-Man-(1-&gt;6)]-alpha-D-Man-(1-&gt;6)]-beta-D-Man-(1-&gt;4)-beta-D-GlcNAc-(1-&gt;4)-beta-D-GlcNAc)-L-asparaginyl-[protein] (N-glucan mannose isomer 8A1,2,3B1,3) + 3 H2O = N(4)-(alpha-D-Man-(1-&gt;3)-[alpha-D-Man-(1-&gt;3)-[alpha-D-Man-(1-&gt;6)]-alpha-D-Man-(1-&gt;6)]-beta-D-Man-(1-&gt;4)-beta-D-GlcNAc-(1-&gt;4)-beta-D-GlcNAc)-L-asparaginyl-[protein] (N-glucan mannose isomer 5A1,2) + 3 beta-D-mannose. It participates in protein modification; protein glycosylation. With respect to regulation, inhibited by both 1-deoxymannojirimycin and kifunensine. Its function is as follows. Involved in the maturation of Asn-linked oligosaccharides. Progressively trim alpha-1,2-linked mannose residues from Man(9)GlcNAc(2) to produce Man(5)GlcNAc(2). In Oryctolagus cuniculus (Rabbit), this protein is Mannosyl-oligosaccharide 1,2-alpha-mannosidase IA (MAN1A1).